We begin with the raw amino-acid sequence, 373 residues long: Alanine dehydrogenase (373 aa).

Substrate is bound by residues R15 and K75. Catalysis depends on H96, which acts as the Proton donor/acceptor. Residues S134, 178-179, D198, S220, 239-240, 267-270, R280, and 299-302 contribute to the NAD(+) site; these read IV, VL, VAID, and VANI. Catalysis depends on D270, which acts as the Proton donor/acceptor.

It belongs to the AlaDH/PNT family. In terms of assembly, homohexamer. Trimer of dimer.

It is found in the cytoplasm. It catalyses the reaction L-alanine + NAD(+) + H2O = pyruvate + NH4(+) + NADH + H(+). The protein operates within amino-acid degradation; L-alanine degradation via dehydrogenase pathway; NH(3) and pyruvate from L-alanine: step 1/1. Catalyzes the reversible reductive amination of pyruvate to L-alanine. This enzyme is a key factor in the assimilation of L-alanine as an energy source through the tricarboxylic acid cycle. This chain is Alanine dehydrogenase, found in Methanococcus maripaludis (strain DSM 14266 / JCM 13030 / NBRC 101832 / S2 / LL).